Reading from the N-terminus, the 424-residue chain is Adenylosuccinate synthetase (424 aa).

Residues 11–17 (GDEGKGK) and 39–41 (GHT) contribute to the GTP site. Residue Asp12 is the Proton acceptor of the active site. Residues Asp12 and Gly39 each coordinate Mg(2+). Residues 12–15 (DEGK), 37–40 (NAGH), Thr127, Arg141, Gln223, Thr238, and Arg302 contribute to the IMP site. The active-site Proton donor is the His40. Position 298 to 304 (298 to 304 (TTTGRGR)) interacts with substrate. GTP-binding positions include Arg304, 330 to 332 (KLD), and 412 to 414 (SVG).

This sequence belongs to the adenylosuccinate synthetase family. Homodimer. Requires Mg(2+) as cofactor.

The protein resides in the cytoplasm. The enzyme catalyses IMP + L-aspartate + GTP = N(6)-(1,2-dicarboxyethyl)-AMP + GDP + phosphate + 2 H(+). It functions in the pathway purine metabolism; AMP biosynthesis via de novo pathway; AMP from IMP: step 1/2. In terms of biological role, plays an important role in the de novo pathway of purine nucleotide biosynthesis. Catalyzes the first committed step in the biosynthesis of AMP from IMP. This chain is Adenylosuccinate synthetase, found in Methanosarcina barkeri (strain Fusaro / DSM 804).